The chain runs to 395 residues: uncharacterized protein (395 aa).

Residues 115 to 144 (TKPPTEGGPEKDQSSPSQTQAAPQGPSTAS) are disordered. Residues 128–141 (SSPSQTQAAPQGPS) are compositionally biased toward low complexity.

This is an uncharacterized protein from Homo sapiens (Human).